The sequence spans 560 residues: Hemocyanin, units G and H (560 aa).

C1 and C11 are joined by a disulfide. The segment at C1–E184 is unit G. The 2'-(S-cysteinyl)-histidine (Cys-His) cross-link spans C12 to H14. Cysteines 93 and 98 form a disulfide. N142 is a glycosylation site (N-linked (GlcNAc...) asparagine). The unit H stretch occupies residues D185 to R560. H230 is a binding site for Cu cation. C236 and C246 are disulfide-bonded. N-linked (GlcNAc...) asparagine glycosylation is present at N240. Residues C247 to H249 constitute a cross-link (2'-(S-cysteinyl)-histidine (Cys-His)). Cu cation contacts are provided by H249, H258, H358, H362, and H389. 2 cysteine pairs are disulfide-bonded: C348-C415 and C476-C482.

It belongs to the tyrosinase family. Hemocyanin subfamily. As to quaternary structure, decamers of large identical subunits (390 kDa), each containing 8 globular oxygen-binding functional units. Cu(2+) is required as a cofactor.

Its function is as follows. Hemocyanins are copper-containing oxygen carriers occurring freely dissolved in the hemolymph of many mollusks and arthropods. This is Hemocyanin, units G and H from Sepia officinalis (Common cuttlefish).